Here is a 412-residue protein sequence, read N- to C-terminus: Proteasome-activating nucleotidase 2 (412 aa).

Residues 28–74 adopt a coiled-coil conformation; that stretch reads LRQHFERMVDVNRELDQRLQNADDRHAELVDEVDQMKARNEALKTAS. ATP-binding positions include 196–201 and histidine 335; that span reads GTGKTM. Residues 409 to 412 form a docks into pockets in the proteasome alpha-ring to cause gate opening region; sequence DYQY.

It belongs to the AAA ATPase family. Homohexamer. The hexameric complex has a two-ring architecture resembling a top hat that caps the 20S proteasome core at one or both ends. Upon ATP-binding, the C-terminus of PAN interacts with the alpha-rings of the proteasome core by binding to the intersubunit pockets.

The protein resides in the cytoplasm. ATPase which is responsible for recognizing, binding, unfolding and translocation of substrate proteins into the archaeal 20S proteasome core particle. Is essential for opening the gate of the 20S proteasome via an interaction with its C-terminus, thereby allowing substrate entry and access to the site of proteolysis. Thus, the C-termini of the proteasomal ATPase function like a 'key in a lock' to induce gate opening and therefore regulate proteolysis. Unfolding activity requires energy from ATP hydrolysis, whereas ATP binding alone promotes ATPase-20S proteasome association which triggers gate opening, and supports translocation of unfolded substrates. The chain is Proteasome-activating nucleotidase 2 from Haloferax volcanii (strain ATCC 29605 / DSM 3757 / JCM 8879 / NBRC 14742 / NCIMB 2012 / VKM B-1768 / DS2) (Halobacterium volcanii).